The sequence spans 297 residues: MGKQVDSKTITWVIENFSSLQSASIHSDQFVVGDCKWRLKAYPKGNEKATYLAYRANNLALYLNVANSKSFPIGWTRHTKFSLTLVNQKSEKLSKLTESQHWFDHKSTSRGFPAMIPLTNLHTNEGFLVNGELTLVAKVEVLEVVGKLDVSKKSSPVMETIDVNGFQVLPQIESVNRLFAKHLDIASKFRPKKPYMKTAYMNVLLSLTKTLCQSPQDLSNDDISGAGAALTYLREAGFKLDWLEKKHGEIKEKKKKEEASLKRLQEMEKQIFNEAQIYKEKVLAARAPLSLNEDNVF.

The region spanning 7–139 (SKTITWVIEN…NGELTLVAKV (133 aa)) is the MATH domain. Residues 239-281 (KLDWLEKKHGEIKEKKKKEEASLKRLQEMEKQIFNEAQIYKEK) adopt a coiled-coil conformation.

The sequence is that of MATH domain and coiled-coil domain-containing protein At2g05420 from Arabidopsis thaliana (Mouse-ear cress).